The following is a 195-amino-acid chain: NADH-ubiquinone oxidoreductase subunit 9 (195 aa).

Belongs to the complex I 30 kDa subunit family. Complex I is composed of about 30 different subunits.

Its subcellular location is the mitochondrion inner membrane. It carries out the reaction a ubiquinone + NADH + 5 H(+)(in) = a ubiquinol + NAD(+) + 4 H(+)(out). Its function is as follows. Core subunit of the mitochondrial membrane respiratory chain NADH dehydrogenase (Complex I) that is believed to belong to the minimal assembly required for catalysis. Complex I functions in the transfer of electrons from NADH to the respiratory chain. The immediate electron acceptor for the enzyme is believed to be ubiquinone. The sequence is that of NADH-ubiquinone oxidoreductase subunit 9 (NAD9) from Acanthamoeba castellanii (Amoeba).